The primary structure comprises 442 residues: C4-dicarboxylate transport protein (442 aa).

8 consecutive transmembrane segments (helical) span residues V10–G30, F40–I60, L77–I97, F144–L164, V183–M203, L221–A241, L331–I351, and A354–I374. Residues L418 to A442 form a disordered region. Over residues P423 to A442 the composition is skewed to basic and acidic residues.

It belongs to the dicarboxylate/amino acid:cation symporter (DAACS) (TC 2.A.23) family.

The protein resides in the cell membrane. Its function is as follows. Responsible for the transport of dicarboxylates such as succinate, fumarate, and malate across the membrane. The sequence is that of C4-dicarboxylate transport protein from Deinococcus deserti (strain DSM 17065 / CIP 109153 / LMG 22923 / VCD115).